Reading from the N-terminus, the 715-residue chain is DNA ligase (715 aa).

NAD(+) is bound by residues 47-51 (DADYD), 96-97 (SL), and Glu128. Lys130 acts as the N6-AMP-lysine intermediate in catalysis. Positions 151, 188, 306, and 330 each coordinate NAD(+). 4 residues coordinate Zn(2+): Cys435, Cys438, Cys453, and Cys459. A BRCT domain is found at 637–715 (RRDTAVAGKT…EDEWLALIGN (79 aa)).

It belongs to the NAD-dependent DNA ligase family. LigA subfamily. The cofactor is Mg(2+). It depends on Mn(2+) as a cofactor.

It catalyses the reaction NAD(+) + (deoxyribonucleotide)n-3'-hydroxyl + 5'-phospho-(deoxyribonucleotide)m = (deoxyribonucleotide)n+m + AMP + beta-nicotinamide D-nucleotide.. Its function is as follows. DNA ligase that catalyzes the formation of phosphodiester linkages between 5'-phosphoryl and 3'-hydroxyl groups in double-stranded DNA using NAD as a coenzyme and as the energy source for the reaction. It is essential for DNA replication and repair of damaged DNA. In Rhodopseudomonas palustris (strain ATCC BAA-98 / CGA009), this protein is DNA ligase.